Consider the following 60-residue polypeptide: Large ribosomal subunit protein uL30 (60 aa).

It belongs to the universal ribosomal protein uL30 family. In terms of assembly, part of the 50S ribosomal subunit.

This is Large ribosomal subunit protein uL30 from Streptococcus suis (strain 98HAH33).